Here is a 487-residue protein sequence, read N- to C-terminus: N-succinylglutamate 5-semialdehyde dehydrogenase (487 aa).

Residues 1 to 23 (MTHFIKGQWQAGKGHDVTSSNPA) form a disordered region. 220-225 (GSSRTG) contacts NAD(+). Catalysis depends on residues E243 and C277.

This sequence belongs to the aldehyde dehydrogenase family. AstD subfamily.

The enzyme catalyses N-succinyl-L-glutamate 5-semialdehyde + NAD(+) + H2O = N-succinyl-L-glutamate + NADH + 2 H(+). The protein operates within amino-acid degradation; L-arginine degradation via AST pathway; L-glutamate and succinate from L-arginine: step 4/5. Catalyzes the NAD-dependent reduction of succinylglutamate semialdehyde into succinylglutamate. The protein is N-succinylglutamate 5-semialdehyde dehydrogenase of Shewanella sp. (strain ANA-3).